The chain runs to 624 residues: DNA-directed RNA polymerase subunit gamma (624 aa).

Residues cysteine 70, cysteine 72, cysteine 85, and cysteine 88 each coordinate Zn(2+). Positions 466, 468, and 470 each coordinate Mg(2+).

The protein belongs to the RNA polymerase beta' chain family. RpoC1 subfamily. In cyanobacteria the RNAP catalytic core is composed of 2 alpha, 1 beta, 1 beta', 1 gamma and 1 omega subunit. When a sigma factor is associated with the core the holoenzyme is formed, which can initiate transcription. Requires Mg(2+) as cofactor. Zn(2+) is required as a cofactor.

It carries out the reaction RNA(n) + a ribonucleoside 5'-triphosphate = RNA(n+1) + diphosphate. Functionally, DNA-dependent RNA polymerase catalyzes the transcription of DNA into RNA using the four ribonucleoside triphosphates as substrates. This chain is DNA-directed RNA polymerase subunit gamma, found in Synechococcus sp. (strain ATCC 27144 / PCC 6301 / SAUG 1402/1) (Anacystis nidulans).